A 55-amino-acid chain; its full sequence is Large ribosomal subunit protein bL32 (55 aa).

A disordered region spans residues 1 to 27 (MAVQQNKPTRSKRGMRRSHDALTTATL).

Belongs to the bacterial ribosomal protein bL32 family.

In Yersinia enterocolitica serotype O:8 / biotype 1B (strain NCTC 13174 / 8081), this protein is Large ribosomal subunit protein bL32.